A 308-amino-acid polypeptide reads, in one-letter code: Cysteine synthase (308 aa).

Residue lysine 45 is modified to N6-(pyridoxal phosphate)lysine. Pyridoxal 5'-phosphate contacts are provided by residues asparagine 75, 179–183 (GTGGT), and serine 267.

The protein belongs to the cysteine synthase/cystathionine beta-synthase family. As to quaternary structure, homodimer. Forms CymR(2):CysK(2) or CymR(4):CysK(4) complexes in the absence of O-acetylserine. Requires pyridoxal 5'-phosphate as cofactor.

The enzyme catalyses O-acetyl-L-serine + hydrogen sulfide = L-cysteine + acetate. The protein operates within amino-acid biosynthesis; L-cysteine biosynthesis; L-cysteine from L-serine: step 2/2. In terms of biological role, catalyzes the conversion of O-acetylserine to cysteine. Also acts as a sensor of cysteine availability in the signal transduction pathway modulating CymR activity. When cysteine is present, the pool of O-acetylserine (OAS) is low, which leads to the formation of a CymR-CysK complex and transcriptional repression of the CymR regulon occurs. In the absence of cysteine, the OAS pool is high and the CymR-CysK complex is mostly dissociated, leading to a faster dissociation of CymR from its DNA targets and the lifting of CymR-dependent repression. This chain is Cysteine synthase (cysK), found in Bacillus subtilis (strain 168).